The sequence spans 170 residues: Cytochrome c-type biogenesis protein CcmE (170 aa).

Residues 1-7 (MTRKKRR) lie on the Cytoplasmic side of the membrane. Residues 8 to 28 (LILIAACGSVLALAVGLILYA) traverse the membrane as a helical; Signal-anchor for type II membrane protein segment. The Periplasmic segment spans residues 29–170 (MSGSIVFFRS…DSTLGPRSER (142 aa)). Residues H122 and Y126 each coordinate heme. The disordered stretch occupies residues 132–170 (ADALKAQGRWQEGGPNRGGPAPKPATAAADSTLGPRSER).

Belongs to the CcmE/CycJ family.

Its subcellular location is the cell inner membrane. Functionally, heme chaperone required for the biogenesis of c-type cytochromes. Transiently binds heme delivered by CcmC and transfers the heme to apo-cytochromes in a process facilitated by CcmF and CcmH. The sequence is that of Cytochrome c-type biogenesis protein CcmE from Methylobacterium radiotolerans (strain ATCC 27329 / DSM 1819 / JCM 2831 / NBRC 15690 / NCIMB 10815 / 0-1).